The primary structure comprises 584 residues: Protein FAM117B (584 aa).

Positions 1–214 are disordered; that stretch reads MSQRVRRNGS…SSSSSIIRRT (214 aa). The residue at position 10 (S10) is a Phosphoserine. Gly residues predominate over residues 53–79; the sequence is TRGGGGGGNNGGNGGASGPSGGGGSGG. Positions 80–90 are enriched in low complexity; the sequence is PRTASRSTSPT. The residue at position 102 (S102) is a Phosphoserine. Over residues 114–132 the composition is skewed to low complexity; that stretch reads TSTRGTSPTRGTAPGARSS. Residues 133–142 are compositionally biased toward pro residues; it reads PPRPQPPPPL. The span at 145 to 154 shows a compositional bias: polar residues; sequence TVSSPSSSPT. Residues 204–214 are compositionally biased toward low complexity; that stretch reads SSSSSSIIRRT. Phosphoserine is present on residues S206, S215, S216, and S268. Disordered regions lie at residues 227-461 and 551-584; these read GHWP…SYMF and STNTEQERVSRGTSTVLPSASLHAPPEPIEEAEG. Residues 287–297 show a composition bias toward basic residues; it reads RSKHSSRHHRD. S340 is subject to Phosphoserine. Over residues 350–361 the composition is skewed to basic and acidic residues; it reads IIIKETGEKEEQ. The span at 379 to 392 shows a compositional bias: polar residues; it reads QRSSSTRSIDTQTP. A Phosphoserine modification is found at S386. The span at 399–412 shows a compositional bias: low complexity; the sequence is SNNSSRSQSVSPTS. Phosphoserine is present on residues S444 and S452.

The chain is Protein FAM117B (Fam117b) from Mus musculus (Mouse).